The chain runs to 328 residues: N-acyl-aromatic-L-amino acid amidohydrolase (carboxylate-forming) A (328 aa).

2 residues coordinate Zn(2+): H30 and E33. Residues R74 and 81–82 (NR) contribute to the substrate site. Residue H127 participates in Zn(2+) binding. E189 and Y300 together coordinate substrate.

Belongs to the AspA/AstE family. Aspartoacylase subfamily. Homotetramer. Zn(2+) serves as cofactor.

It localises to the apical cell membrane. The protein localises to the cytoplasm. It carries out the reaction an N-acyl-aromatic L-alpha-amino acid + H2O = an aromatic L-alpha-amino acid + a carboxylate. The enzyme catalyses an N-acetyl-L-cysteine-S-conjugate + H2O = an S-substituted L-cysteine + acetate. Its function is as follows. Plays an important role in deacetylating mercapturic acids in kidney proximal tubules. This is N-acyl-aromatic-L-amino acid amidohydrolase (carboxylate-forming) A (acy3.1) from Danio rerio (Zebrafish).